A 379-amino-acid chain; its full sequence is Cytochrome b (379 aa).

4 consecutive transmembrane segments (helical) span residues 32–52 (FGSL…FLAM), 76–97 (WLIR…YMHI), 112–132 (WNVG…GYVL), and 177–197 (FFAF…IHLL). Residues His-82 and His-96 each coordinate heme b. Residues His-181 and His-195 each contribute to the heme b site. His-200 lines the a ubiquinone pocket. Helical transmembrane passes span 225–245 (YKDL…ALFS), 287–307 (LGGV…PFLH), 319–339 (LTQI…WIGG), and 346–366 (FIII…VLSP).

The protein belongs to the cytochrome b family. In terms of assembly, the cytochrome bc1 complex contains 3 respiratory subunits (MT-CYB, CYC1 and UQCRFS1), 2 core proteins (UQCRC1 and UQCRC2) and probably 6 low-molecular weight proteins. Heme b serves as cofactor.

The protein resides in the mitochondrion inner membrane. Functionally, component of the ubiquinol-cytochrome c reductase complex (complex III or cytochrome b-c1 complex) that is part of the mitochondrial respiratory chain. The b-c1 complex mediates electron transfer from ubiquinol to cytochrome c. Contributes to the generation of a proton gradient across the mitochondrial membrane that is then used for ATP synthesis. In Chlorophthalmus agassizi (Shortnose greeneye), this protein is Cytochrome b (mt-cyb).